Here is a 399-residue protein sequence, read N- to C-terminus: PCI domain-containing protein 2 (399 aa).

In terms of domain architecture, PCI spans 210–391 (VTFKYYVGRK…QKLVVSKQNP (182 aa)).

This sequence belongs to the CSN12 family.

In Xenopus laevis (African clawed frog), this protein is PCI domain-containing protein 2 (pcid2).